Here is a 301-residue protein sequence, read N- to C-terminus: 5'-adenylylsulfate reductase-like 5 (301 aa).

The first 21 residues, 1 to 21 (MTRCAVVAAVAAVLLVAGAAA), serve as a signal peptide directing secretion. One can recognise a Thioredoxin domain in the interval 51-164 (CIRIEPSPPV…LVDFYKETTG (114 aa)). N-linked (GlcNAc...) asparagine glycosylation is present at Asn139. A helical transmembrane segment spans residues 201-221 (FVLLAVLFIILKVAAHFVPIV). The N-linked (GlcNAc...) asparagine glycan is linked to Asn268.

It localises to the membrane. The polypeptide is 5'-adenylylsulfate reductase-like 5 (APRL5) (Oryza sativa subsp. japonica (Rice)).